The primary structure comprises 879 residues: Alanine--tRNA ligase (879 aa).

Zn(2+) contacts are provided by His-566, His-570, Cys-668, and His-672.

It belongs to the class-II aminoacyl-tRNA synthetase family. It depends on Zn(2+) as a cofactor.

It is found in the cytoplasm. The catalysed reaction is tRNA(Ala) + L-alanine + ATP = L-alanyl-tRNA(Ala) + AMP + diphosphate. Its function is as follows. Catalyzes the attachment of alanine to tRNA(Ala) in a two-step reaction: alanine is first activated by ATP to form Ala-AMP and then transferred to the acceptor end of tRNA(Ala). Also edits incorrectly charged Ser-tRNA(Ala) and Gly-tRNA(Ala) via its editing domain. The chain is Alanine--tRNA ligase from Halalkalibacterium halodurans (strain ATCC BAA-125 / DSM 18197 / FERM 7344 / JCM 9153 / C-125) (Bacillus halodurans).